The primary structure comprises 462 residues: Juvenile hormone epoxide hydrolase (462 aa).

A helical transmembrane segment spans residues 4-24; the sequence is ILSSFVAGVAIGSGLVITYVL. The active-site Nucleophile is D227. Residue Y372 is the Proton donor of the active site. H428 functions as the Proton acceptor in the catalytic mechanism.

The protein belongs to the peptidase S33 family.

Its subcellular location is the microsome membrane. The protein resides in the endoplasmic reticulum membrane. It carries out the reaction cis-stilbene oxide + H2O = (1R,2R)-hydrobenzoin. The catalysed reaction is 1-(4-methoxyphenyl)-N-methyl-N-[(3-methyloxetan-3-yl)methyl]methanamine + H2O = 2-{[(4-methoxybenzyl)(methyl)amino]methyl}-2-methylpropane-1,3-diol. In terms of biological role, catalyzes juvenile hormone hydrolysis. This chain is Juvenile hormone epoxide hydrolase, found in Manduca sexta (Tobacco hawkmoth).